A 1547-amino-acid polypeptide reads, in one-letter code: Fatty acid synthase subunit alpha (1547 aa).

A disordered region spans residues 94–121 (TLPEAHPPPPIDSHQEPSTQTQATHRSA). The segment covering 109 to 118 (EPSTQTQATH) has biased composition (polar residues). Residues 145-221 (LPVSTIVRSL…ETMSIGHNGR (77 aa)) enclose the Carrier domain. Serine 180 carries the post-translational modification O-(pantetheine 4'-phosphoryl)serine. Residues 563–798 (GKNVLITGAG…ATLMGGTITT (236 aa)) form a ketoreductase (KR) domain region. The 473-residue stretch at 1004–1476 (KESLQEIVLQ…QKGSQAILIH (473 aa)) folds into the Ketosynthase family 3 (KS3) domain. Catalysis depends on for beta-ketoacyl synthase activity residues cysteine 1190 and histidine 1442.

Belongs to the thiolase-like superfamily. Fungal fatty acid synthetase subunit alpha family. It depends on pantetheine 4'-phosphate as a cofactor.

The catalysed reaction is acetyl-CoA + n malonyl-CoA + 2n NADPH + 4n H(+) = a long-chain-acyl-CoA + n CoA + n CO2 + 2n NADP(+).. It catalyses the reaction a fatty acyl-[ACP] + malonyl-[ACP] + H(+) = a 3-oxoacyl-[ACP] + holo-[ACP] + CO2. It carries out the reaction a (3R)-hydroxyacyl-[ACP] + NADP(+) = a 3-oxoacyl-[ACP] + NADPH + H(+). It participates in mycotoxin biosynthesis; HC-toxin biosynthesis. Fatty acid synthase alpha subunit, part of the diffuse TOX2 gene cluster that mediates the biosynthesis of the HC-toxin, cyclic tetrapeptide of structure cyclo(D-Pro-L-Ala-D-Ala-L-Aeo), where Aeo stands for 2-amino-9,10-epoxi-8-oxodecanoic acid. HC-toxin is a determinant of specificity and virulence in the interaction between the producing fungus and its host, maize. TOXH contribute to the synthesis of the decanoic backbone of 2-amino-9,10-epoxi-8-oxodecanoic acid, an essential precursor for the production of the major forms of HC-toxin by the non-ribosomal peptide synthetase HTS1. This is Fatty acid synthase subunit alpha from Cochliobolus carbonum (Maize leaf spot fungus).